Reading from the N-terminus, the 247-residue chain is MKKLVLLRHGESQWNRENRFTGWVDVDLSEKGREEARTAGQLLKDEGFVFDLAYTSVLKRAIRTLWTVLDEMNLMWIPVTKNWRLNERHYGALQGLNKAETAQRHGDEQVLIWRRSYDTPPPALTESDEFWPGKDPRYASLSSQELPATECLKDTVARFLPYWHETIAPQIRDGKNVIITAHGNSLRALVKYLDNISDEDIVGLNIPTGIPLVYELDDDLKPLKSYYLGDQEELKKKVEVVVKQGKA.

Residues 8–15 (RHGESQWN), 21–22 (TG), Arg-60, 87–90 (ERHY), Lys-98, 114–115 (RR), and 183–184 (GN) contribute to the substrate site. His-9 (tele-phosphohistidine intermediate) is an active-site residue. Glu-87 (proton donor/acceptor) is an active-site residue.

Belongs to the phosphoglycerate mutase family. BPG-dependent PGAM subfamily.

It carries out the reaction (2R)-2-phosphoglycerate = (2R)-3-phosphoglycerate. Its pathway is carbohydrate degradation; glycolysis; pyruvate from D-glyceraldehyde 3-phosphate: step 3/5. In terms of biological role, catalyzes the interconversion of 2-phosphoglycerate and 3-phosphoglycerate. The chain is 2,3-bisphosphoglycerate-dependent phosphoglycerate mutase from Chlorobaculum tepidum (strain ATCC 49652 / DSM 12025 / NBRC 103806 / TLS) (Chlorobium tepidum).